The following is a 444-amino-acid chain: Glutamyl-tRNA reductase (444 aa).

Residues 49 to 52, serine 117, 122 to 124, and glutamine 128 contribute to the substrate site; these read TCNR and EPQ. Cysteine 50 acts as the Nucleophile in catalysis. An NADP(+)-binding site is contributed by 202 to 207; that stretch reads GAGETI.

Belongs to the glutamyl-tRNA reductase family. Homodimer.

It carries out the reaction (S)-4-amino-5-oxopentanoate + tRNA(Glu) + NADP(+) = L-glutamyl-tRNA(Glu) + NADPH + H(+). It participates in porphyrin-containing compound metabolism; protoporphyrin-IX biosynthesis; 5-aminolevulinate from L-glutamyl-tRNA(Glu): step 1/2. Its function is as follows. Catalyzes the NADPH-dependent reduction of glutamyl-tRNA(Glu) to glutamate 1-semialdehyde (GSA). The sequence is that of Glutamyl-tRNA reductase from Mannheimia succiniciproducens (strain KCTC 0769BP / MBEL55E).